The primary structure comprises 101 residues: Small ribosomal subunit protein eS24 (101 aa).

This sequence belongs to the eukaryotic ribosomal protein eS24 family.

The chain is Small ribosomal subunit protein eS24 from Methanosarcina mazei (strain ATCC BAA-159 / DSM 3647 / Goe1 / Go1 / JCM 11833 / OCM 88) (Methanosarcina frisia).